The sequence spans 369 residues: Peptidyl-prolyl cis-trans isomerase D (369 aa).

In terms of domain architecture, PPIase cyclophilin-type spans 7–175 (YFDISCNGKP…EDWKIADCGE (169 aa)). TPR repeat units lie at residues 217–250 (VSKI…LNDY), 268–301 (LSCY…EQID), and 306–339 (TKAL…EPND).

The protein belongs to the cyclophilin-type PPIase family. PPIase D subfamily.

Its subcellular location is the cytoplasm. The catalysed reaction is [protein]-peptidylproline (omega=180) = [protein]-peptidylproline (omega=0). Functionally, PPIases accelerate the folding of proteins. It catalyzes the cis-trans isomerization of proline imidic peptide bonds in oligopeptides. This is Peptidyl-prolyl cis-trans isomerase D (CPR6) from Candida albicans (strain SC5314 / ATCC MYA-2876) (Yeast).